Consider the following 228-residue polypeptide: Cytidylate kinase (228 aa).

17–25 (GPTASGKGT) is a binding site for ATP.

This sequence belongs to the cytidylate kinase family. Type 1 subfamily.

The protein resides in the cytoplasm. The catalysed reaction is CMP + ATP = CDP + ADP. The enzyme catalyses dCMP + ATP = dCDP + ADP. In Burkholderia pseudomallei (strain 1106a), this protein is Cytidylate kinase.